Here is a 36-residue protein sequence, read N- to C-terminus: U-limacoditoxin(7)-Dv63 (36 aa).

The signal sequence occupies residues 1 to 19; the sequence is MFKPRVILLITIIAVFSEF.

It belongs to the limacoditoxin-7 family. In terms of tissue distribution, expressed by the venom secretory cell of the spine. The spine is a cuticular structure containing a single large nucleated venom-secreting cell at its base. It is an independent unit capable of producing, storing and injecting venom. On the back of D.vulnerans caterpillars, spines are grouped together by 50 to 100 to form scoli, of which there are eight in D.vulnerans.

It localises to the secreted. In terms of biological role, peptide with insecticidal and antiparasitic activities. Induces irreversible paralysis in D.melanogaster when tested at high doses. It shows a moderate antiparasitic activity against the major pathogenic nematode of ruminants (H.contortus, EC(50)=41.3 uM). Does not show antimicrobial activities. Does not induce increase in intracellular calcium in mouse DRG neurons, suggesting that it does not induce pain. The polypeptide is U-limacoditoxin(7)-Dv63 (Doratifera vulnerans (Mottled cup moth)).